The primary structure comprises 545 residues: CTP synthase (545 aa).

The amidoligase domain stretch occupies residues 1-266 (MTTNYIFVTG…DDYICKRFSL (266 aa)). S14 is a CTP binding site. S14 contacts UTP. ATP is bound by residues 15–20 (SLGKGI) and D72. Positions 72 and 140 each coordinate Mg(2+). CTP is bound by residues 147 to 149 (DIE), 187 to 192 (KTKPTQ), and K223. UTP contacts are provided by residues 187-192 (KTKPTQ) and K223. An ATP-binding site is contributed by 239-241 (KDV). One can recognise a Glutamine amidotransferase type-1 domain in the interval 291 to 542 (TIGMVGKYIE…VKAANEHQKR (252 aa)). G352 serves as a coordination point for L-glutamine. C379 serves as the catalytic Nucleophile; for glutamine hydrolysis. Residues 380 to 383 (LGMQ), E403, and R470 contribute to the L-glutamine site. Active-site residues include H515 and E517.

The protein belongs to the CTP synthase family. As to quaternary structure, homotetramer.

It carries out the reaction UTP + L-glutamine + ATP + H2O = CTP + L-glutamate + ADP + phosphate + 2 H(+). The catalysed reaction is L-glutamine + H2O = L-glutamate + NH4(+). It catalyses the reaction UTP + NH4(+) + ATP = CTP + ADP + phosphate + 2 H(+). The protein operates within pyrimidine metabolism; CTP biosynthesis via de novo pathway; CTP from UDP: step 2/2. Its activity is regulated as follows. Allosterically activated by GTP, when glutamine is the substrate; GTP has no effect on the reaction when ammonia is the substrate. The allosteric effector GTP functions by stabilizing the protein conformation that binds the tetrahedral intermediate(s) formed during glutamine hydrolysis. Inhibited by the product CTP, via allosteric rather than competitive inhibition. Catalyzes the ATP-dependent amination of UTP to CTP with either L-glutamine or ammonia as the source of nitrogen. Regulates intracellular CTP levels through interactions with the four ribonucleotide triphosphates. The protein is CTP synthase of Salmonella paratyphi A (strain ATCC 9150 / SARB42).